A 70-amino-acid polypeptide reads, in one-letter code: ATP synthase subunit c (70 aa).

The next 2 membrane-spanning stretches (helical) occupy residues 4–24 (IAAA…NGLI) and 45–65 (IMFI…VIAF).

The protein belongs to the ATPase C chain family. As to quaternary structure, F-type ATPases have 2 components, F(1) - the catalytic core - and F(0) - the membrane proton channel. F(1) has five subunits: alpha(3), beta(3), gamma(1), delta(1), epsilon(1). F(0) has three main subunits: a(1), b(2) and c(10-14). The alpha and beta chains form an alternating ring which encloses part of the gamma chain. F(1) is attached to F(0) by a central stalk formed by the gamma and epsilon chains, while a peripheral stalk is formed by the delta and b chains.

Its subcellular location is the cell membrane. Its function is as follows. F(1)F(0) ATP synthase produces ATP from ADP in the presence of a proton or sodium gradient. F-type ATPases consist of two structural domains, F(1) containing the extramembraneous catalytic core and F(0) containing the membrane proton channel, linked together by a central stalk and a peripheral stalk. During catalysis, ATP synthesis in the catalytic domain of F(1) is coupled via a rotary mechanism of the central stalk subunits to proton translocation. In terms of biological role, key component of the F(0) channel; it plays a direct role in translocation across the membrane. A homomeric c-ring of between 10-14 subunits forms the central stalk rotor element with the F(1) delta and epsilon subunits. This chain is ATP synthase subunit c, found in Staphylococcus aureus (strain Mu3 / ATCC 700698).